The following is a 665-amino-acid chain: Phosphatidylinositol-3-phosphate phosphatase MTMR1 (665 aa).

Met1 is modified (N-acetylmethionine). The segment covering 1–11 has biased composition (low complexity); that stretch reads MDRPAAAAAAG. The tract at residues 1–51 is disordered; the sequence is MDRPAAAAAAGCEGGGGPNPGPAGGRRPPRAAGGATAGSRQPSVETLDSPT. A compositionally biased stretch (gly residues) spans 12–24; sequence CEGGGGPNPGPAG. Positions 39-51 are enriched in polar residues; it reads SRQPSVETLDSPT. Phosphoserine is present on residues Ser43 and Ser49. Residues 90–161 enclose the GRAM domain; that stretch reads NKLAQMEEAP…GVISRVEKIG (72 aa). In terms of domain architecture, Myotubularin phosphatase spans 226-601; it reads GWKVYDPVSE…SHLELWVNYY (376 aa). Residues Asn351, Asn376, and Ile377 each contribute to the a 1,2-diacyl-sn-glycero-3-phospho-(1D-myo-inositol-3-phosphate) site. Cys438 functions as the Phosphocysteine intermediate in the catalytic mechanism. The a 1,2-diacyl-sn-glycero-3-phospho-(1D-myo-inositol-3-phosphate) site is built by Ser439, Asp440, Gly441, Trp442, Asp443, Arg444, and Arg484. Ser439 serves as a coordination point for phosphate. 4 residues coordinate phosphate: Gly441, Trp442, Asp443, and Arg444. A required for dimerization region spans residues 608–665; that stretch reads MRPQMPIHQNLKELLAVRAELQKRVEGLQREVATRAVSSSSERGSSPSHSATSVHTSV. The disordered stretch occupies residues 642-665; the sequence is RAVSSSSERGSSPSHSATSVHTSV. The segment covering 645–657 has biased composition (low complexity); it reads SSSSERGSSPSHS.

Belongs to the protein-tyrosine phosphatase family. Non-receptor class myotubularin subfamily. As to quaternary structure, homodimer.

It localises to the cell membrane. The protein localises to the cytoplasm. It carries out the reaction a 1,2-diacyl-sn-glycero-3-phospho-(1D-myo-inositol-3-phosphate) + H2O = a 1,2-diacyl-sn-glycero-3-phospho-(1D-myo-inositol) + phosphate. The catalysed reaction is 1,2-dioctanoyl-sn-glycero-3-phospho-(1-D-myo-inositol-3-phosphate) + H2O = 1,2-dioctanoyl-sn-glycero-3-phospho-(1D-myo-inositol) + phosphate. It catalyses the reaction a 1,2-diacyl-sn-glycero-3-phospho-(1D-myo-inositol-3,5-bisphosphate) + H2O = a 1,2-diacyl-sn-glycero-3-phospho-(1D-myo-inositol-5-phosphate) + phosphate. Its function is as follows. Lipid phosphatase that specifically dephosphorylates the D-3 position of phosphatidylinositol 3-phosphate, generating phosphatidylinositol. Could also dephosphorylate phosphatidylinositol 3,5-bisphosphate to produce phosphatidylinositol 5-phosphate. This chain is Phosphatidylinositol-3-phosphate phosphatase MTMR1, found in Homo sapiens (Human).